A 166-amino-acid chain; its full sequence is Phosphopantetheine adenylyltransferase (166 aa).

Serine 11 is a substrate binding site. Residues 11-12 (SF) and histidine 19 contribute to the ATP site. Residues lysine 43, alanine 76, and arginine 90 each coordinate substrate. Residues 91–93 (GLR), glutamate 101, and 126–132 (YRYFSSS) contribute to the ATP site.

The protein belongs to the bacterial CoaD family. In terms of assembly, homohexamer. Mg(2+) serves as cofactor.

The protein localises to the cytoplasm. It catalyses the reaction (R)-4'-phosphopantetheine + ATP + H(+) = 3'-dephospho-CoA + diphosphate. Its pathway is cofactor biosynthesis; coenzyme A biosynthesis; CoA from (R)-pantothenate: step 4/5. Its function is as follows. Reversibly transfers an adenylyl group from ATP to 4'-phosphopantetheine, yielding dephospho-CoA (dPCoA) and pyrophosphate. The protein is Phosphopantetheine adenylyltransferase of Streptococcus mutans serotype c (strain ATCC 700610 / UA159).